The following is a 619-amino-acid chain: Chaperone protein DnaK (619 aa).

Threonine 175 is subject to Phosphothreonine; by autocatalysis. Residues 578–619 (NGGAQGEGFDPNNMGGANAGTGAANSNDDNVVDADFEVQDDK) form a disordered region. Low complexity predominate over residues 589–606 (NNMGGANAGTGAANSNDD). Residues 607 to 619 (NVVDADFEVQDDK) are compositionally biased toward acidic residues.

It belongs to the heat shock protein 70 family.

Its function is as follows. Acts as a chaperone. The sequence is that of Chaperone protein DnaK from Clostridium perfringens (strain SM101 / Type A).